A 226-amino-acid polypeptide reads, in one-letter code: Exosome complex component rrp46 (226 aa).

Residues 205–226 form a disordered region; the sequence is NESDGHENEKNPKEDVEMDVVA. Basic and acidic residues predominate over residues 207-219; that stretch reads SDGHENEKNPKED.

This sequence belongs to the RNase PH family. Component of the RNA exosome complex. Specifically part of the catalytically inactive RNA exosome core complex (Exo-9) which may associate with the catalytic subunits rrp6 and dis3 in cytoplasmic- and nuclear-specific RNA exosome complex forms. Exo-9 is formed by a hexameric base ring of RNase PH domain-containing subunits and a cap ring consisting of csl4, rrp4 and rrp40.

It localises to the cytoplasm. The protein resides in the nucleus. It is found in the nucleolus. Non-catalytic component of the RNA exosome complex which has 3'-&gt;5' exoribonuclease activity and participates in a multitude of cellular RNA processing and degradation events. In the nucleus, the RNA exosome complex is involved in proper maturation of stable RNA species such as rRNA, snRNA and snoRNA, in the elimination of RNA processing by-products and non-coding 'pervasive' transcripts, such as antisense RNA species and cryptic unstable transcripts (CUTs), and of mRNAs with processing defects, thereby limiting or excluding their export to the cytoplasm. In the cytoplasm, the RNA exosome complex is involved in general mRNA turnover and in RNA surveillance pathways, preventing translation of aberrant mRNAs. The catalytic inactive RNA exosome core complex of 9 subunits (Exo-9) is proposed to play a pivotal role in the binding and presentation of RNA for ribonucleolysis, and to serve as a scaffold for the association with catalytic subunits and accessory proteins or complexes. ski6 is part of the hexameric ring of RNase PH domain-containing subunits proposed to form a central channel which threads RNA substrates for degradation. This Schizosaccharomyces pombe (strain 972 / ATCC 24843) (Fission yeast) protein is Exosome complex component rrp46 (rrp46).